The sequence spans 217 residues: Cytidylate kinase (217 aa).

11 to 19 (GPAGAGKST) contacts ATP.

Belongs to the cytidylate kinase family. Type 1 subfamily.

Its subcellular location is the cytoplasm. It catalyses the reaction CMP + ATP = CDP + ADP. The enzyme catalyses dCMP + ATP = dCDP + ADP. The sequence is that of Cytidylate kinase from Clostridium perfringens (strain SM101 / Type A).